Here is a 445-residue protein sequence, read N- to C-terminus: Trimethylamine monooxygenase (445 aa).

6 residues coordinate FAD: Ser-14, Glu-39, Gln-41, Leu-47, Trp-48, and His-64. Residues Trp-72 and Asn-74 each coordinate NADP(+). The FAD site is built by Asn-74 and Val-127. NADP(+) is bound by residues Thr-204, Ser-205, Ser-207, and Arg-228. The FAD site is built by Gln-317 and Thr-320. Residue Arg-411 participates in NADP(+) binding.

It belongs to the FMO family. Requires FAD as cofactor.

It carries out the reaction trimethylamine + NADPH + O2 = trimethylamine N-oxide + NADP(+) + H2O. Functionally, catalyzes the oxidation of trimethylamine (TMA) to produce trimethylamine N-oxide (TMAO). In vitro, has a broad substrate specificity, oxidizing many nitrogen- and sulfur-containing compounds, including dimethylamine (DMA), dimethylsulfide (DMS) and dimethylsulfoxide (DMSO). This is Trimethylamine monooxygenase from Roseovarius sp. (strain 217).